A 58-amino-acid polypeptide reads, in one-letter code: UPF0391 membrane protein MADE_1011595 (58 aa).

The next 2 helical transmembrane spans lie at 4-24 and 27-47; these read WAIT…GGIA and ATGI…ISLI.

It belongs to the UPF0391 family.

Its subcellular location is the cell membrane. The chain is UPF0391 membrane protein MADE_1011595 from Alteromonas mediterranea (strain DSM 17117 / CIP 110805 / LMG 28347 / Deep ecotype).